The chain runs to 79 residues: Conotoxin VnMEKL-024 (79 aa).

A signal peptide spans M1–A19. The propeptide occupies L20 to E50. Cystine bridges form between C51–C65, C58–C69, and C64–C76.

Belongs to the conotoxin O2 superfamily. In terms of tissue distribution, expressed by the venom duct.

It is found in the secreted. In Conus ventricosus (Mediterranean cone), this protein is Conotoxin VnMEKL-024.